Here is a 257-residue protein sequence, read N- to C-terminus: Hydroxypyruvate/pyruvate aldolase (257 aa).

His48 acts as the Proton acceptor in catalysis. Positions 152 and 178 each coordinate a divalent metal cation.

It belongs to the HpcH/HpaI aldolase family. A divalent metal cation serves as cofactor.

The enzyme catalyses D-glyceraldehyde + 3-hydroxypyruvate = 2-dehydro-D-gluconate. It catalyses the reaction D-glyceraldehyde + pyruvate = 2-dehydro-3-deoxy-L-galactonate. It carries out the reaction 2-dehydro-3-deoxy-D-gluconate = D-glyceraldehyde + pyruvate. Functionally, aldolase which can catalyze in vitro the aldolisation reaction between hydroxypyruvate (HPA) or pyruvate (PA) and D-glyceraldehyde (D-GA). The condensation of hydroxypyruvate and D-glyceraldehyde produces 2-dehydro-D-gluconate as the major product. The condensation of pyruvate and D-glyceraldehyde produces 2-dehydro-3-deoxy-L-galactonate as the major product and 2-dehydro-3-deoxy-D-gluconate. This Roseovarius nubinhibens (strain ATCC BAA-591 / DSM 15170 / ISM) protein is Hydroxypyruvate/pyruvate aldolase.